The primary structure comprises 433 residues: GTPase Obg (433 aa).

The Obg domain maps to 1-159 (MKFVDSADLI…FEIRAELKVL (159 aa)). Residues 160–332 (ADVGFVGLPN…LLFMIYEELK (173 aa)) enclose the OBG-type G domain. GTP-binding positions include 166-173 (GLPNAGKS), 191-195 (FTTIT), 213-216 (DLPG), 284-287 (NKMD), and 313-315 (SGL). Mg(2+)-binding residues include S173 and T193. The OCT domain maps to 355 to 433 (KFEEQKEDIQ…VFDYELEWTD (79 aa)).

This sequence belongs to the TRAFAC class OBG-HflX-like GTPase superfamily. OBG GTPase family. As to quaternary structure, monomer. Mg(2+) serves as cofactor.

The protein localises to the cytoplasm. Functionally, an essential GTPase which binds GTP, GDP and possibly (p)ppGpp with moderate affinity, with high nucleotide exchange rates and a fairly low GTP hydrolysis rate. Plays a role in control of the cell cycle, stress response, ribosome biogenesis and in those bacteria that undergo differentiation, in morphogenesis control. The polypeptide is GTPase Obg (Mycoplasma mycoides subsp. mycoides SC (strain CCUG 32753 / NCTC 10114 / PG1)).